A 316-amino-acid polypeptide reads, in one-letter code: C1GALT1-specific chaperone 1 (316 aa).

Topologically, residues 1–6 (MLSESS) are cytoplasmic. The chain crosses the membrane as a helical; Signal-anchor for type II membrane protein span at residues 7–26 (SFLKGVMLGSIFCALITMLG). At 27–316 (HIRIGNRMHH…FLPPNGSEND (290 aa)) the chain is on the lumenal side.

This sequence belongs to the glycosyltransferase 31 family. Beta3-Gal-T subfamily. As to quaternary structure, associates with core 1 beta-3-galactosyltransferase (C1GALT1), probably not with the soluble active form.

Its subcellular location is the membrane. Functionally, probable chaperone required for the generation of 1 O-glycan Gal-beta1-3GalNAc-alpha1-Ser/Thr (T antigen), which is a precursor for many extended O-glycans in glycoproteins. Probably acts as a specific molecular chaperone assisting the folding/stability of core 1 beta-3-galactosyltransferase (C1GALT1). The polypeptide is C1GALT1-specific chaperone 1 (C1galt1c1) (Rattus norvegicus (Rat)).